Reading from the N-terminus, the 359-residue chain is 3-isopropylmalate dehydrogenase (359 aa).

The substrate site is built by Arg-97, Arg-107, Arg-135, and Asp-224. Mg(2+) is bound by residues Asp-224, Asp-248, and Asp-252. 282–294 is an NAD(+) binding site; it reads GSAPDIAGKDIAN.

Belongs to the isocitrate and isopropylmalate dehydrogenases family. LeuB type 1 subfamily. Homodimer. Mg(2+) is required as a cofactor. Requires Mn(2+) as cofactor.

It is found in the cytoplasm. It carries out the reaction (2R,3S)-3-isopropylmalate + NAD(+) = 4-methyl-2-oxopentanoate + CO2 + NADH. It participates in amino-acid biosynthesis; L-leucine biosynthesis; L-leucine from 3-methyl-2-oxobutanoate: step 3/4. Functionally, catalyzes the oxidation of 3-carboxy-2-hydroxy-4-methylpentanoate (3-isopropylmalate) to 3-carboxy-4-methyl-2-oxopentanoate. The product decarboxylates to 4-methyl-2 oxopentanoate. The sequence is that of 3-isopropylmalate dehydrogenase from Prochlorococcus marinus (strain NATL2A).